The primary structure comprises 427 residues: MNRNEILFDRAKAIIPGGVNSPVRAFGSVGGVPRFIKKAEGAYVWDENGTRYTDYVGSWGPAIVGHAHPEVVETVCEAALGGLSFGAPTEGEIVIAEEIAKIMPSVERLRLVSSGTEATMTAIRLARGFTGRDKIIKFEGCYHGHSDSLLVKAGSGLLTFGNPSSAGVPADFTKHTLVLEYNNIAQLEEAFAQSGNEIACVIVEPFVGNMNLVRPTEAFVKALRGLTEKYGAVLIYDEVMTGFRVALGGAQSLHGITPDLTTMGKVIGGGMPLAAFGGRKDIMECISPLGGVYQAGTLSGNPIAVAAGLKTLEIIQREGFYENLTARTEQLVQGFRTAADAAGIEFTADSVGGMFGLYFAAHAPRNYADMARSNIEGFKQFFHGMLDRNVAFGPSAYEAGFVSAAHTPELIDETVAVAVEVFKAMAE.

Position 265 is an N6-(pyridoxal phosphate)lysine (Lys265).

The protein belongs to the class-III pyridoxal-phosphate-dependent aminotransferase family. HemL subfamily. Homodimer. Requires pyridoxal 5'-phosphate as cofactor.

The protein localises to the cytoplasm. The catalysed reaction is (S)-4-amino-5-oxopentanoate = 5-aminolevulinate. The protein operates within porphyrin-containing compound metabolism; protoporphyrin-IX biosynthesis; 5-aminolevulinate from L-glutamyl-tRNA(Glu): step 2/2. The sequence is that of Glutamate-1-semialdehyde 2,1-aminomutase from Neisseria meningitidis serogroup B (strain ATCC BAA-335 / MC58).